We begin with the raw amino-acid sequence, 180 residues long: Large ribosomal subunit protein uL6 (180 aa).

This sequence belongs to the universal ribosomal protein uL6 family. As to quaternary structure, part of the 50S ribosomal subunit.

Its function is as follows. This protein binds to the 23S rRNA, and is important in its secondary structure. It is located near the subunit interface in the base of the L7/L12 stalk, and near the tRNA binding site of the peptidyltransferase center. The chain is Large ribosomal subunit protein uL6 from Lachnoclostridium phytofermentans (strain ATCC 700394 / DSM 18823 / ISDg) (Clostridium phytofermentans).